The chain runs to 331 residues: Gamma-parvin (331 aa).

At M1 the chain carries N-acetylmethionine. Residues 18–38 (QPTEEELPRGGKKKYLSPNSK) are disordered. 2 Calponin-homology (CH) domains span residues 44–151 (EELQ…KRFQ) and 210–317 (HAVQ…QKHS).

Belongs to the parvin family. As to quaternary structure, interacts with ILK; the interaction promotes the establishment of cell polarity required for leukocyte migration. Interacts with ARHGEF6; the guanine nucleotide exchange factor activity of ARHGEF6 is essential for the PARVG-induced enhancement of cell spreading. Expressed strongly in spleen and testis, moderately in lung and weakly in brain and heart.

It is found in the cell junction. Its subcellular location is the focal adhesion. The protein localises to the cell membrane. The protein resides in the cytoplasm. It localises to the cytoskeleton. Its function is as follows. Plays a role with ILK in promoting the cell adhesion and spreading of leukocytes. In Mus musculus (Mouse), this protein is Gamma-parvin (Parvg).